Reading from the N-terminus, the 96-residue chain is C-C motif chemokine 20 (96 aa).

Positions 1–26 (MMCSSKNLLLAALMSVLLLHFCSKSE) are cleaved as a signal peptide. 2 cysteine pairs are disulfide-bonded: Cys-32–Cys-58 and Cys-33–Cys-74.

It belongs to the intercrine beta (chemokine CC) family.

The protein resides in the secreted. Functionally, acts as a ligand for C-C chemokine receptor CCR6. Signals through binding and activation of CCR6 and induces a strong chemotactic response and mobilization of intracellular calcium ions. The ligand-receptor pair CCL20-CCR6 is responsible for the chemotaxis of dendritic cells (DC), effector/memory T-cells and B-cells and plays an important role at skin and mucosal surfaces under homeostatic and inflammatory conditions, as well as in pathology, including cancer and autoimmune diseases. CCL20 acts as a chemotactic factor that attracts lymphocytes and, slightly, neutrophils, but not monocytes. Involved in the recruitment of both the pro-inflammatory IL17 producing helper T-cells (Th17) and the regulatory T-cells (Treg) to sites of inflammation. Required for optimal migration of thymic natural regulatory T cells (nTregs) and DN1 early thymocyte progenitor cells. Positively regulates sperm motility and chemotaxis via its binding to CCR6 which triggers Ca2+ mobilization in the sperm which is important for its motility. May be involved in formation and function of the mucosal lymphoid tissues by attracting lymphocytes and dendritic cells towards epithelial cells. This chain is C-C motif chemokine 20 (CCL20), found in Bos taurus (Bovine).